The chain runs to 444 residues: Protein kinase C and casein kinase substrate in neurons protein 1 (444 aa).

Phosphoserine occurs at positions 2 and 79. The region spanning 13–283 (EETTDSFWEV…AIRGADAQDD (271 aa)) is the F-BAR domain. Residues 26–275 (KRTVKRIDDG…QVYRELEQAI (250 aa)) are a coiled coil. T184 carries the post-translational modification Phosphothreonine. Positions 313–384 (AAKKEKQPKK…NGGSNPFDED (72 aa)) are disordered. The segment covering 314 to 324 (AKKEKQPKKAE) has biased composition (basic and acidic residues). Residues 336–358 (ESTSQAGDRGSVSSYDRGQTYAT) are compositionally biased toward polar residues. S346, S348, S349, S361, and S365 each carry phosphoserine. An SH3 domain is found at 385 to 444 (AKGVRVRALYDYDGQEQDELSFKAGDELTKLGEEDEQGWCRGRLDSGQLGLYPANYVEVV). Position 394 is a phosphotyrosine (Y394). Phosphoserine occurs at positions 405 and 430.

The protein belongs to the PACSIN family. As to quaternary structure, homodimer. May form heterooligomers with other PACSINs. Interacts with MAPT. Interacts (via SH3 domain) with SYNJ1 and WASL. Interacts (via SH3 domain) with DNM1; the interaction is reduced by DNM1 phosphorylation. Interacts with DNM2 and DNM3. Interacts with both COBL and DBNL. Identified in a complex composed of COBL, PACSIN1 and WASL. Interacts with EHD1 and EHD3. Interacts with TRPV4. Phosphorylated by casein kinase 2 (CK2) and protein kinase C (PKC).

It is found in the cytoplasm. It localises to the cell projection. The protein localises to the synapse. Its subcellular location is the synaptosome. The protein resides in the ruffle membrane. It is found in the membrane. It localises to the cytoplasmic vesicle membrane. The protein localises to the cytosol. Its subcellular location is the cell membrane. Binds to membranes via its F-BAR domain and mediates membrane tubulation. Plays a role in the reorganization of the microtubule cytoskeleton via its interaction with MAPT; this decreases microtubule stability and inhibits MAPT-induced microtubule polymerization. Plays a role in cellular transport processes by recruiting DNM1, DNM2 and DNM3 to membranes. Plays a role in the reorganization of the actin cytoskeleton and in neuron morphogenesis via its interaction with COBL and WASL, and by recruiting COBL to the cell cortex. Plays a role in the regulation of neurite formation, neurite branching and the regulation of neurite length. Required for normal synaptic vesicle endocytosis; this process retrieves previously released neurotransmitters to accommodate multiple cycles of neurotransmission. Required for normal excitatory and inhibitory synaptic transmission. This Bos taurus (Bovine) protein is Protein kinase C and casein kinase substrate in neurons protein 1 (PACSIN1).